A 43-amino-acid chain; its full sequence is Protein PsbN (43 aa).

A helical transmembrane segment spans residues 5 to 25 (TLISVFVASLVIGITAYAIFV).

Belongs to the PsbN family.

Its subcellular location is the plastid. It is found in the chloroplast thylakoid membrane. May play a role in photosystem I and II biogenesis. In Cyanidioschyzon merolae (strain NIES-3377 / 10D) (Unicellular red alga), this protein is Protein PsbN.